Reading from the N-terminus, the 191-residue chain is Flavin prenyltransferase UbiX (191 aa).

Residues 13–15 (GAS), Thr-39, 90–93 (TMKT), and Arg-125 each bind FMN. Dimethylallyl phosphate contacts are provided by Tyr-155 and Lys-171.

Belongs to the UbiX/PAD1 family.

The enzyme catalyses dimethylallyl phosphate + FMNH2 = prenylated FMNH2 + phosphate. Flavin prenyltransferase that catalyzes the synthesis of the prenylated FMN cofactor (prenyl-FMN) for 4-hydroxy-3-polyprenylbenzoic acid decarboxylase UbiD. The prenyltransferase is metal-independent and links a dimethylallyl moiety from dimethylallyl monophosphate (DMAP) to the flavin N5 and C6 atoms of FMN. In Methanothermobacter thermautotrophicus (strain ATCC 29096 / DSM 1053 / JCM 10044 / NBRC 100330 / Delta H) (Methanobacterium thermoautotrophicum), this protein is Flavin prenyltransferase UbiX.